The primary structure comprises 387 residues: (S)-8-oxocitronellyl enol synthase (387 aa).

NADP(+) is bound by residues 36–38, 64–65, 82–83, 106–107, and glutamine 140; these read TGI, RR, DI, and SW. Catalysis depends on residues lysine 144 and tyrosine 177. The substrate site is built by lysine 144 and tyrosine 177. Residues tyrosine 177 and 211–213 contribute to the NADP(+) site; that span reads SMM.

It belongs to the short-chain dehydrogenases/reductases (SDR) family. Highly divergent. In terms of tissue distribution, expressed in leaves.

It carries out the reaction (S)-8-oxocitronellyl enol + NADP(+) = (6E)-8-oxogeranial + NADPH + H(+). It catalyses the reaction (S)-8-oxocitronellyl enol + NAD(+) = (6E)-8-oxogeranial + NADH + H(+). The catalysed reaction is (R)-8-oxocitronellyl enol + NADP(+) = (6E)-8-oxogeranial + NADPH + H(+). In terms of biological role, iridoid synthase that catalyzes the first step in generation of the iridoid ring scaffold using the linear monoterpene (6E)-8-oxogeranial as substrate. Reduces 8-oxogeranial, generating an unstable product that is subsequently cyclized into several possible products, either non-enzymically or by dedicated cyclases. Iridoids comprise a large family of distinctive bicyclic monoterpenes that possess a wide range of pharmacological activities, including anticancer, anti-inflammatory, antifungal and antibacterial activities. The sequence is that of (S)-8-oxocitronellyl enol synthase from Antirrhinum majus (Garden snapdragon).